The following is a 55-amino-acid chain: Large ribosomal subunit protein bL33 (55 aa).

It belongs to the bacterial ribosomal protein bL33 family.

The protein is Large ribosomal subunit protein bL33 of Bradyrhizobium diazoefficiens (strain JCM 10833 / BCRC 13528 / IAM 13628 / NBRC 14792 / USDA 110).